A 535-amino-acid chain; its full sequence is Reticuline oxidase (535 aa).

The first 23 residues, 1 to 23, serve as a signal peptide directing secretion; the sequence is MMCRSLTLRFFLFIVLLQTCVRG. An N-linked (GlcNAc...) asparagine glycan is attached at Asn-42. An FAD-binding PCMH-type domain is found at 71–245; the sequence is TVSKPSFIVM…YAWKIKLLPV (175 aa). Residues 108–170 constitute a cross-link (6-(S-cysteinyl)-8alpha-(pros-histidyl)-FAD (His-Cys)); sequence HSYEGLSYTA…DTLGFTAGWC (63 aa). The N-linked (GlcNAc...) asparagine glycan is linked to Asn-475.

It belongs to the oxygen-dependent FAD-linked oxidoreductase family. Requires FAD as cofactor. It depends on a metal cation as a cofactor. The FAD cofactor is bound via a bicovalent 6-S-cysteinyl, 8alpha-N1-histidyl FAD linkage. As to expression, expressed in roots and stems. Not detected in leaves or reproductive organs. Restricted to the parietal region of sieve elements adjacent or proximal to laticifers.

The protein resides in the cytoplasmic vesicle. The enzyme catalyses (S)-reticuline + O2 = (S)-scoulerine + H2O2 + H(+). It participates in alkaloid biosynthesis; (S)-scoulerine biosynthesis; (S)-scoulerine from (S)-reticuline: step 1/1. Oxygen-dependent FAD-dependent oxidoreductase essential to the formation of benzophenanthridine alkaloids in the response of plants to pathogenic attack. Catalyzes the stereospecific conversion of the N-methyl moiety of (S)-reticuline into the berberine bridge carbon of (S)-scoulerine. Involved in the biosynthesis of sanguinarine. This is Reticuline oxidase (BBE1) from Papaver somniferum (Opium poppy).